Reading from the N-terminus, the 332-residue chain is DNA-directed RNA polymerase subunit alpha (332 aa).

Positions 1–232 are alpha N-terminal domain (alpha-NTD); that stretch reads MQVSNFLKPR…DQLTAFVELE (232 aa). The segment at 246–332 is alpha C-terminal domain (alpha-CTD); sequence IDPVLLQPID…LREEETKVTA (87 aa).

This sequence belongs to the RNA polymerase alpha chain family. As to quaternary structure, homodimer. The RNAP catalytic core consists of 2 alpha, 1 beta, 1 beta' and 1 omega subunit. When a sigma factor is associated with the core the holoenzyme is formed, which can initiate transcription.

It carries out the reaction RNA(n) + a ribonucleoside 5'-triphosphate = RNA(n+1) + diphosphate. DNA-dependent RNA polymerase catalyzes the transcription of DNA into RNA using the four ribonucleoside triphosphates as substrates. This is DNA-directed RNA polymerase subunit alpha from Nitrosococcus oceani (strain ATCC 19707 / BCRC 17464 / JCM 30415 / NCIMB 11848 / C-107).